Consider the following 335-residue polypeptide: Adenosine deaminase (335 aa).

Positions 12 and 14 each coordinate Zn(2+). The substrate site is built by histidine 14 and aspartate 16. Histidine 197 provides a ligand contact to Zn(2+). The active-site Proton donor is the glutamate 200. Aspartate 278 contacts Zn(2+).

Belongs to the metallo-dependent hydrolases superfamily. Adenosine and AMP deaminases family. Adenosine deaminase subfamily. The cofactor is Zn(2+).

It catalyses the reaction adenosine + H2O + H(+) = inosine + NH4(+). The catalysed reaction is 2'-deoxyadenosine + H2O + H(+) = 2'-deoxyinosine + NH4(+). Functionally, catalyzes the hydrolytic deamination of adenosine and 2-deoxyadenosine. This chain is Adenosine deaminase, found in Clostridium botulinum (strain Kyoto / Type A2).